An 813-amino-acid polypeptide reads, in one-letter code: MGLPGSIVFLIMIHAFCAKKTPTNTLPSLLSLLGITDLPSLRLNILSLDGSANNQGSWVRDNTTFVYIGASSPANGVLFYMPTSHVQQMTFYKRPVSKLLASNNLIKFLNTGSYINHSFMTAMPPYRRNVQIPSDRSGLKLDDKDDAQPTGTNPPTELKNLKPIDVVNPEHRFILTSELTGTYVKHVCFVDPMDMLIPVDYAHIRTIIFGSDGAEVIMKIGITFASITISMKSAPPVELILSERARNISLIWPALKPYEPVDKFTRRPYLIYLLGPHMNASDMEIKSYINMIESVEESSNYDFQIAQTHAQLFIFAATPISDINDIYCFRVVTTRLFMSLVASVRNAFQSGYISFDEIIKTEANIKMITETLSTFALHSNPGTYFLLSGMHLRNENADIIKSLIRKTIINASKNTASLSILQHLYVLRSAYAFNISQESGNLGEHVSSISLELIIALHEESVRDTIAWNTSARHALYYAFASIFQRPPNEWDASRTARKALLFASSMCTEEHIVATELVIQEMYIKINVKNSPVHILDVYTPCVTALRMDISEHHHRLYAMSDVILHPVIEKYLENDSRGIDAEEELETKAELVITKLKTPLMRRLTIYASEVVTCSDADILEATALLVLPISGLGSYVVTRQLGIRGIVYNVDGVDVNNQLYITYVRLPCTTTAGNIVPMVLPRPLGSDCPYCGCVLLRYSTNGNLRHTIYISSQDLQRELIAGGNSSIRYFNPTIAQIYGTSLLLYPNGTIVRILAFESERVTIISATYVATATAGASIAISIAIITVRMIINNFRYNYHRYKKLSLYDDL.

The signal sequence occupies residues 1–18 (MGLPGSIVFLIMIHAFCA). Residues 19-769 (KKTPTNTLPS…ESERVTIISA (751 aa)) are Virion surface-facing. Residues N62 and N116 are each glycosylated (N-linked (GlcNAc...) asparagine; by host). Positions 135 to 159 (DRSGLKLDDKDDAQPTGTNPPTELK) are disordered. Positions 137-147 (SGLKLDDKDDA) are enriched in basic and acidic residues. Positions 212 to 273 (DGAEVIMKIG…FTRRPYLIYL (62 aa)) are interaction with gL. N247, N279, N410, N434, N469, N576, N727, and N750 each carry an N-linked (GlcNAc...) asparagine; by host glycan. The chain crosses the membrane as a helical span at residues 770 to 790 (TYVATATAGASIAISIAIITV). The Intravirion portion of the chain corresponds to 791–813 (RMIINNFRYNYHRYKKLSLYDDL).

The protein belongs to the herpesviridae glycoprotein H family. In terms of assembly, interacts with glycoprotein L (gL); this interaction is necessary for the correct processing and cell surface expression of gH. The heterodimer gH/gL seems to interact with gB trimers during fusion. In terms of processing, N-glycosylated, O-glycosylated, and sialylated.

The protein localises to the virion membrane. Its subcellular location is the host cell membrane. It localises to the host endosome membrane. In terms of biological role, the heterodimer glycoprotein H-glycoprotein L is required for the fusion of viral and plasma membranes leading to virus entry into the host cell. Following initial binding to host receptor, membrane fusion is mediated by the fusion machinery composed of gB and the heterodimer gH/gL. May also be involved in the fusion between the virion envelope and the outer nuclear membrane during virion morphogenesis. This Gallus gallus (Chicken) protein is Envelope glycoprotein H.